We begin with the raw amino-acid sequence, 155 residues long: Transcriptional repressor NrdR (155 aa).

A zinc finger spans residues 3–34 (CPFCGNIDTQVKDSRPAEDHVSIRRRRFCPAC). In terms of domain architecture, ATP-cone spans 49–139 (LVVIKSSGKR…VYKNFQAADD (91 aa)).

The protein belongs to the NrdR family. Requires Zn(2+) as cofactor.

Functionally, negatively regulates transcription of bacterial ribonucleotide reductase nrd genes and operons by binding to NrdR-boxes. The sequence is that of Transcriptional repressor NrdR from Cereibacter sphaeroides (strain ATCC 17029 / ATH 2.4.9) (Rhodobacter sphaeroides).